Here is a 213-residue protein sequence, read N- to C-terminus: ATP-dependent dethiobiotin synthetase BioD (213 aa).

13 to 18 (GIGKTV) contacts ATP. T17 provides a ligand contact to Mg(2+). Residue K33 is part of the active site. E100 contributes to the Mg(2+) binding site. ATP-binding positions include 100 to 103 (EGAG) and 184 to 186 (PRL).

Belongs to the dethiobiotin synthetase family. In terms of assembly, homodimer. Requires Mg(2+) as cofactor.

The protein resides in the cytoplasm. It carries out the reaction (7R,8S)-7,8-diammoniononanoate + CO2 + ATP = (4R,5S)-dethiobiotin + ADP + phosphate + 3 H(+). Its pathway is cofactor biosynthesis; biotin biosynthesis; biotin from 7,8-diaminononanoate: step 1/2. In terms of biological role, catalyzes a mechanistically unusual reaction, the ATP-dependent insertion of CO2 between the N7 and N8 nitrogen atoms of 7,8-diaminopelargonic acid (DAPA, also called 7,8-diammoniononanoate) to form a ureido ring. This Rhodopseudomonas palustris (strain HaA2) protein is ATP-dependent dethiobiotin synthetase BioD.